Reading from the N-terminus, the 246-residue chain is Hydroxyacylglutathione hydrolase (246 aa).

Zn(2+) is bound by residues H58, H60, D62, H63, H117, D137, and H175.

This sequence belongs to the metallo-beta-lactamase superfamily. Glyoxalase II family. In terms of assembly, monomer. Requires Zn(2+) as cofactor.

The catalysed reaction is an S-(2-hydroxyacyl)glutathione + H2O = a 2-hydroxy carboxylate + glutathione + H(+). It participates in secondary metabolite metabolism; methylglyoxal degradation; (R)-lactate from methylglyoxal: step 2/2. Thiolesterase that catalyzes the hydrolysis of S-D-lactoyl-glutathione to form glutathione and D-lactic acid. This Prochlorococcus marinus (strain MIT 9301) protein is Hydroxyacylglutathione hydrolase.